A 352-amino-acid chain; its full sequence is Protein pelota homolog (352 aa).

Belongs to the eukaryotic release factor 1 family. Pelota subfamily. In terms of assembly, monomer. It depends on a divalent metal cation as a cofactor.

It localises to the cytoplasm. May function in recognizing stalled ribosomes, interact with stem-loop structures in stalled mRNA molecules, and effect endonucleolytic cleavage of the mRNA. May play a role in the release non-functional ribosomes and degradation of damaged mRNAs. Has endoribonuclease activity. This Thermofilum pendens (strain DSM 2475 / Hrk 5) protein is Protein pelota homolog.